A 303-amino-acid polypeptide reads, in one-letter code: UDP-3-O-acyl-N-acetylglucosamine deacetylase (303 aa).

Zn(2+) is bound by residues H78, H237, and D241. The Proton donor role is filled by H264.

This sequence belongs to the LpxC family. It depends on Zn(2+) as a cofactor.

It catalyses the reaction a UDP-3-O-[(3R)-3-hydroxyacyl]-N-acetyl-alpha-D-glucosamine + H2O = a UDP-3-O-[(3R)-3-hydroxyacyl]-alpha-D-glucosamine + acetate. The protein operates within glycolipid biosynthesis; lipid IV(A) biosynthesis; lipid IV(A) from (3R)-3-hydroxytetradecanoyl-[acyl-carrier-protein] and UDP-N-acetyl-alpha-D-glucosamine: step 2/6. Functionally, catalyzes the hydrolysis of UDP-3-O-myristoyl-N-acetylglucosamine to form UDP-3-O-myristoylglucosamine and acetate, the committed step in lipid A biosynthesis. This is UDP-3-O-acyl-N-acetylglucosamine deacetylase from Stenotrophomonas maltophilia (strain R551-3).